The chain runs to 106 residues: uncharacterized protein (106 aa).

The protein resides in the mitochondrion. This is an uncharacterized protein from Claviceps purpurea (Ergot fungus).